The sequence spans 278 residues: Protein mtd-1 (278 aa).

The signal sequence occupies residues 1 to 17 (MRSSLLLLVFFLSIGWA). Residues 18–254 (RYCVHNEKSW…EMLEEIEARK (237 aa)) lie on the Extracellular side of the membrane. Residues Asn-40, Asn-73, Asn-163, and Asn-190 are each glycosylated (N-linked (GlcNAc...) asparagine). Residues 255–271 (VPVDSSAPVNIILSIAF) form a helical membrane-spanning segment. At 272 to 278 (SIFLIHF) the chain is on the cytoplasmic side.

The protein localises to the cell membrane. Its function is as follows. Plays a role in mechanosensory transduction (touch sensitivity). This Caenorhabditis elegans protein is Protein mtd-1.